Reading from the N-terminus, the 306-residue chain is Voltage-dependent anion channel-forming protein RSc3414 (306 aa).

Transmembrane regions (helical) follow at residues 28–48 (LFLI…WLPI), 50–70 (VNLS…FLGF), 213–233 (YSVM…FGLV), and 239–259 (FTPV…AIAA).

It belongs to the anion channel-forming bestrophin (TC 1.A.46) family.

It localises to the cell membrane. The chain is Voltage-dependent anion channel-forming protein RSc3414 from Ralstonia nicotianae (strain ATCC BAA-1114 / GMI1000) (Ralstonia solanacearum).